Consider the following 340-residue polypeptide: 4-amino-5-hydroxymethyl-2-methylpyrimidine phosphate synthase THI5 (340 aa).

At Lys-62 the chain carries N6-(pyridoxal phosphate)lysine. His-66 is an active-site residue. Residue 115 to 118 coordinates pyridoxal 5'-phosphate; sequence GEFG. The CCCFC; essential for catalytic activity, may be the site of iron coordination motif lies at 195–199; sequence CCCFC.

This sequence belongs to the NMT1/THI5 family. In terms of assembly, homodimer. Fe cation is required as a cofactor.

It catalyses the reaction N(6)-(pyridoxal phosphate)-L-lysyl-[4-amino-5-hydroxymethyl-2-methylpyrimidine phosphate synthase] + L-histidyl-[4-amino-5-hydroxymethyl-2-methylpyrimidine phosphate synthase] + 2 Fe(3+) + 4 H2O = L-lysyl-[4-amino-5-hydroxymethyl-2-methylpyrimidine phosphate synthase] + (2S)-2-amino-5-hydroxy-4-oxopentanoyl-[4-amino-5-hydroxymethyl-2-methylpyrimidine phosphate synthase] + 4-amino-2-methyl-5-(phosphooxymethyl)pyrimidine + 3-oxopropanoate + 2 Fe(2+) + 2 H(+). It functions in the pathway cofactor biosynthesis; thiamine diphosphate biosynthesis. Responsible for the formation of the pyrimidine heterocycle in the thiamine biosynthesis pathway. Catalyzes the formation of hydroxymethylpyrimidine phosphate (HMP-P) from histidine and pyridoxal phosphate (PLP). The protein uses PLP and the active site histidine to form HMP-P, generating an inactive enzyme. The enzyme can only undergo a single turnover, which suggests it is a suicide enzyme. In Saccharomyces cerevisiae (strain ATCC 204508 / S288c) (Baker's yeast), this protein is 4-amino-5-hydroxymethyl-2-methylpyrimidine phosphate synthase THI5.